Here is a 91-residue protein sequence, read N- to C-terminus: Acyl carrier protein (91 aa).

A Carrier domain is found at 6–81; the sequence is EEIIAELGQI…DIVAYIQKLE (76 aa). Ser-41 is modified (O-(pantetheine 4'-phosphoryl)serine).

The protein belongs to the acyl carrier protein (ACP) family. Post-translationally, 4'-phosphopantetheine is transferred from CoA to a specific serine of apo-ACP by AcpS. This modification is essential for activity because fatty acids are bound in thioester linkage to the sulfhydryl of the prosthetic group.

It is found in the cytoplasm. It functions in the pathway lipid metabolism; fatty acid biosynthesis. Its function is as follows. Carrier of the growing fatty acid chain in fatty acid biosynthesis. The polypeptide is Acyl carrier protein (Rhodococcus erythropolis (strain PR4 / NBRC 100887)).